The sequence spans 251 residues: MSEKPKVYQGVRVKITVKELLQQRRAHQAASGGTRSGGSSVHLSDPVAPSSAGLYFEPEPISSTPNYLQRGEFSSCVSCEENSSCLDQIFDSYLQTEMHPEPLLNSTQSAPHHFPDSFQATPFCFNQSLIPGSPSNSSILSGSLDYSYSPVQLPSYAPENYNSPASLDTRTCGYPPEDHSYQHLSSHAQYSCFSSATTSICYCASCEAEDLDALQAAEYFYPSTDCVDFAPSAAATSDFYKRETNCDICYS.

In terms of domain architecture, OCA spans 5–27 (PKVYQGVRVKITVKELLQQRRAH). A disordered region spans residues 24-45 (RRAHQAASGGTRSGGSSVHLSD). Positions 31 to 40 (SGGTRSGGSS) are enriched in low complexity.

Belongs to the POU2AF family. In terms of assembly, interacts with POU2F3 in a DNA-dependent manner; this interaction increases POU2F3 transactivation activity. Expressed in many cell types of epithelial, mesenchymal and hematopoietic origins. Expressed in tufs cells.

The protein resides in the cytoplasm. Its subcellular location is the nucleus. Functionally, transcriptional coactivator that specifically associates with POU2F3. This complex drives the development of tuft cells, a rare a rare chemosensory cells that coordinate immune and neural functions within mucosal epithelial tissues. The chain is POU class 2 homeobox associating factor 3 from Homo sapiens (Human).